We begin with the raw amino-acid sequence, 655 residues long: MTECFLPPTSSPSEHRRVEHGSGLTRTPSSEEISPTKFPGLYRTGEPSPPHDILHEPPDVVSDDEKDHGKKKGKFKKKEKRTEGYAAFQEDSSGDEAESPSKMKRSKGIHVFKKPSFSKKKEKDFKIKEKPKEEKHKEEKHKEEKHKEKKSKDLTAADVVKQWKEKKKKKKPIQEPEVPQIDVPNLKPIFGIPLADAVERTMMYDGIRLPAVFRECIDYVEKYGMKCEGIYRVSGIKSKVDELKAAYDREESTNLEDYEPNTVASLLKQYLRDLPENLLTKELMPRFEEACGRTTETEKVQEFQRLLKELPECNYLLISWLIVHMDHVIAKELETKMNIQNISIVLSPTVQISNRVLYVFFTHVQELFGNVVLKQVMKPLRWSNMATMPTLPETQAGIKEEIRRQEFLLNCLHRDLQGGIKDLSKEERLWEVQRILTALKRKLREAKRQECETKIAQEIASLSKEDVSKEEMNENEEVINILLAQENEILTEQEELLAMEQFLRRQIASEKEEIERLRAEIAEIQSRQQHGRSETEEYSSESESESEDEEELQIILEDLQRQNEELEIKNNHLNQAIHEEREAIIELRVQLRLLQMQRAKAEQQAQEDEEPEWRGGAVQPPRDGVLEPKAAKEQPKAGKEPAKPSPSRDRKETSI.

A disordered region spans residues 1 to 158; it reads MTECFLPPTS…KKSKDLTAAD (158 aa). Position 2 is an N-acetylthreonine (threonine 2). A compositionally biased stretch (polar residues) spans 24-33; the sequence is LTRTPSSEEI. A phosphoserine mark is found at serine 29, serine 30, and serine 34. Residue threonine 44 is modified to Phosphothreonine. Serine 48 and serine 62 each carry phosphoserine. The span at 52–68 shows a compositional bias: basic and acidic residues; that stretch reads DILHEPPDVVSDDEKDH. 69–74 serves as a coordination point for ATP; it reads GKKKGK. Residues 69-79 show a composition bias toward basic residues; it reads GKKKGKFKKKE. A phosphoserine mark is found at serine 92 and serine 93. A compositionally biased stretch (basic residues) spans 102-118; the sequence is KMKRSKGIHVFKKPSFS. Residues 102–119 form a nuclear localization signal region; sequence KMKRSKGIHVFKKPSFSK. Residues 119-155 are compositionally biased toward basic and acidic residues; that stretch reads KKKEKDFKIKEKPKEEKHKEEKHKEEKHKEKKSKDLT. The tract at residues 154–219 is mediates association with membranes and could form transmembrane domains; the sequence is LTAADVVKQW…PAVFRECIDY (66 aa). In terms of domain architecture, Rho-GAP spans 192–380; that stretch reads IPLADAVERT…VVLKQVMKPL (189 aa). Positions 403–499 are mediates interaction with RALA and RALB; it reads RRQEFLLNCL…LTEQEELLAM (97 aa). 418-425 serves as a coordination point for ATP; the sequence is GGIKDLSK. Residues serine 461 and serine 463 each carry the phosphoserine modification. The mediates interaction with REPS1 and REPS2 stretch occupies residues 500-655; sequence EQFLRRQIAS…PSRDRKETSI (156 aa). Disordered stretches follow at residues 525–551 and 601–655; these read QSRQ…DEEE and AEQQ…ETSI. Residues 536-551 show a composition bias toward acidic residues; that stretch reads EEYSSESESESEDEEE. Residues 624 to 655 are compositionally biased toward basic and acidic residues; the sequence is GVLEPKAAKEQPKAGKEPAKPSPSRDRKETSI. The residue at position 645 (serine 645) is a Phosphoserine.

As to quaternary structure, interacts with the GTP-bound form of RALA (via effector domain); during mitosis, recruits RALBP1 to the mitochondrion where it promotes DNM1L phosphorylation and mitochondrial fission. Interacts with DNM1L; mediates its mitotic kinase cyclin B-CDK1-mediated phosphorylation during mitosis to promote mitochondrial fission. Interacts with the mitotic kinase cyclin B-CDK1 during mitosis. Interacts with the GTP-bound form of RALB (via effector domain). Interacts with REPS1; the interaction is direct and does not affect RALA-binding nor GTPase activator activity of RALBP1. Interacts with REPS2; the interaction is direct and does not affect RALA-binding nor GTPase activator activity of RALBP1. Interacts with EPN1, NUMB and TFAP2A during interphase and mitosis. Interacts with AP2M1; as part of the AP2 complex. Interacts with CDC42. Interacts with RAC1. Post-translationally, tyrosine-phosphorylated upon stimulation of cells with EGF. May undergo proteolytic cleavage to give peptides which reassemble to form a transporter complex. As to expression, expressed ubiquitously but at low levels. Shows a strong expression in the erythrocytes.

Its subcellular location is the cell membrane. The protein localises to the cytoplasm. The protein resides in the cytosol. It is found in the cytoskeleton. It localises to the spindle pole. Its subcellular location is the nucleus. The protein localises to the mitochondrion. It catalyses the reaction an S-substituted glutathione(in) + ATP + H2O = an S-substituted glutathione(out) + ADP + phosphate + H(+). It carries out the reaction ATP + H2O + xenobioticSide 1 = ADP + phosphate + xenobioticSide 2.. The catalysed reaction is leukotriene C4(in) + ATP + H2O = leukotriene C4(out) + ADP + phosphate + H(+). Its function is as follows. Multifunctional protein that functions as a downstream effector of RALA and RALB. As a GTPase-activating protein/GAP can inactivate CDC42 and RAC1 by stimulating their GTPase activity. As part of the Ral signaling pathway, may also regulate ligand-dependent EGF and insulin receptors-mediated endocytosis. During mitosis, may act as a scaffold protein in the phosphorylation of EPSIN/EPN1 by the mitotic kinase cyclin B-CDK1, preventing endocytosis during that phase of the cell cycle. During mitosis, also controls mitochondrial fission as an effector of RALA. Recruited to mitochondrion by RALA, acts as a scaffold to foster the mitotic kinase cyclin B-CDK1-mediated phosphorylation and activation of DNM1L. In terms of biological role, could also function as a primary ATP-dependent active transporter for glutathione conjugates of electrophiles. May also actively catalyze the efflux of a wide range of substrates including xenobiotics like doxorubicin (DOX) contributing to cell multidrug resistance. This Homo sapiens (Human) protein is RalA-binding protein 1.